The sequence spans 448 residues: MSQSTATYINVIGAGLAGSEAAYQIAKRGIPVKLYEMRGVKATPQHKTTNFAELVCSNSFRGDSLTNAVGLLKEEMRRLDSIIMRNGEANRVPAGGAMAVDREGYAESVTAELENHPLIEVIRDEITEIPDDAITVIATGPLTSDALAEKIHALNGGDGFYFYDAAAPIIDKSTIDMSKVYLKSRYDKGEAAYLNCPMTKEEFMAFHDALTTAEEAPLNAFEKEKYFEGCMPIEVMAKRGIKTMLYGPMKPVGLEYPDDYTGPRDGEFKTPYAVVQLRQDNAAGSLYNIVGFQTHLKWGEQKRVFQMIPGLENAEFVRYGVMHRNSYMDSPNLLTETFQSRSNPNLFFAGQMTGVEGYVESAASGLVAGINAARLFKREEALIFPQTTAIGSLPHYVTHADSKHFQPMNVNFGIIKELEGPRIRDKKERYAAIASRALADLDTCLASL.

FAD is bound at residue 13–18 (GAGLAG).

The protein belongs to the MnmG family. TrmFO subfamily. FAD is required as a cofactor.

It is found in the cytoplasm. The catalysed reaction is uridine(54) in tRNA + (6R)-5,10-methylene-5,6,7,8-tetrahydrofolate + NADH + H(+) = 5-methyluridine(54) in tRNA + (6S)-5,6,7,8-tetrahydrofolate + NAD(+). It catalyses the reaction uridine(54) in tRNA + (6R)-5,10-methylene-5,6,7,8-tetrahydrofolate + NADPH + H(+) = 5-methyluridine(54) in tRNA + (6S)-5,6,7,8-tetrahydrofolate + NADP(+). Its function is as follows. Catalyzes the folate-dependent formation of 5-methyl-uridine at position 54 (M-5-U54) in all tRNAs. The protein is Methylenetetrahydrofolate--tRNA-(uracil-5-)-methyltransferase TrmFO of Streptococcus pyogenes serotype M4 (strain MGAS10750).